The sequence spans 181 residues: Adenine phosphoribosyltransferase (181 aa).

The protein belongs to the purine/pyrimidine phosphoribosyltransferase family. Homodimer.

It localises to the cytoplasm. It carries out the reaction AMP + diphosphate = 5-phospho-alpha-D-ribose 1-diphosphate + adenine. The protein operates within purine metabolism; AMP biosynthesis via salvage pathway; AMP from adenine: step 1/1. Catalyzes a salvage reaction resulting in the formation of AMP, that is energically less costly than de novo synthesis. The protein is Adenine phosphoribosyltransferase of Methylobacterium sp. (strain 4-46).